Here is a 63-residue protein sequence, read N- to C-terminus: Beta-defensin 38 (63 aa).

The N-terminal stretch at 1 to 21 (MKISCFLLLVLSLYLFQVNQA) is a signal peptide. Cystine bridges form between C29–C58, C36–C51, and C41–C59.

It belongs to the beta-defensin family.

It localises to the secreted. Functionally, has antibacterial activity. This is Beta-defensin 38 (Defb38) from Rattus norvegicus (Rat).